The chain runs to 1230 residues: ATP-dependent helicase/nuclease subunit A (1230 aa).

In terms of domain architecture, UvrD-like helicase ATP-binding spans arginine 4–arginine 480. Alanine 25–threonine 32 provides a ligand contact to ATP. One can recognise a UvrD-like helicase C-terminal domain in the interval alanine 517–glycine 799. The interval threonine 535–glutamate 554 is disordered. Over residues alanine 545–glutamate 554 the composition is skewed to acidic residues.

The protein belongs to the helicase family. AddA subfamily. As to quaternary structure, heterodimer of AddA and AddB/RexB. It depends on Mg(2+) as a cofactor.

The enzyme catalyses Couples ATP hydrolysis with the unwinding of duplex DNA by translocating in the 3'-5' direction.. It catalyses the reaction ATP + H2O = ADP + phosphate + H(+). Functionally, the heterodimer acts as both an ATP-dependent DNA helicase and an ATP-dependent, dual-direction single-stranded exonuclease. Recognizes the chi site generating a DNA molecule suitable for the initiation of homologous recombination. The AddA nuclease domain is required for chi fragment generation; this subunit has the helicase and 3' -&gt; 5' nuclease activities. This Desulforudis audaxviator (strain MP104C) protein is ATP-dependent helicase/nuclease subunit A.